A 337-amino-acid polypeptide reads, in one-letter code: MDDLKALIGKVATGATLTREEASCAFDSMMSGEATPSQMGGLLMALRVRGETVDEITGAVAAMRSKMLRVTAPADAVDVVGTGGDGSGSVNVSTCASFIVAGAGVPVAKHGNRALSSKSGAADCLAALGIKIDLTPEQVGRCVNEAGIGFMFAPSHHPAMKNVGPTRVELATRTIFNLLGPLSNPAGVTRQMVGVFSRQWVQPLAQVLKNLGSDSVWVVHGSDGLDEITLAGPTFVAALENGNIRSFEVTPEDAGLSRAHGDALKGGDAEANAASLRGVLEGRPGAFRDVALLNAAAALIVAGKAKTLKDGVAFGTTSLDSGAAMNKLKQLIAVSNG.

Residues glycine 81, 84–85 (GD), serine 89, 91–94 (NVST), 109–117 (KHGNRALSS), and alanine 121 contribute to the 5-phospho-alpha-D-ribose 1-diphosphate site. Anthranilate is bound at residue glycine 81. Residue serine 93 participates in Mg(2+) binding. Asparagine 112 is a binding site for anthranilate. Arginine 167 lines the anthranilate pocket. Residues aspartate 226 and glutamate 227 each contribute to the Mg(2+) site.

This sequence belongs to the anthranilate phosphoribosyltransferase family. Homodimer. It depends on Mg(2+) as a cofactor.

The catalysed reaction is N-(5-phospho-beta-D-ribosyl)anthranilate + diphosphate = 5-phospho-alpha-D-ribose 1-diphosphate + anthranilate. Its pathway is amino-acid biosynthesis; L-tryptophan biosynthesis; L-tryptophan from chorismate: step 2/5. Functionally, catalyzes the transfer of the phosphoribosyl group of 5-phosphorylribose-1-pyrophosphate (PRPP) to anthranilate to yield N-(5'-phosphoribosyl)-anthranilate (PRA). This Nitrobacter hamburgensis (strain DSM 10229 / NCIMB 13809 / X14) protein is Anthranilate phosphoribosyltransferase.